The sequence spans 182 residues: Regulatory protein RecX (182 aa).

The disordered stretch occupies residues 12 to 54 (LSQRDHSESELRRKLAAPPFSAKGNWGKRSGAKSSNLVESNPV). Positions 13–24 (SQRDHSESELRR) are enriched in basic and acidic residues. The segment covering 43-54 (AKSSNLVESNPV) has biased composition (polar residues).

It belongs to the RecX family.

The protein resides in the cytoplasm. Modulates RecA activity. This chain is Regulatory protein RecX, found in Yersinia pseudotuberculosis serotype I (strain IP32953).